The primary structure comprises 255 residues: Small ribosomal subunit protein uS2 (255 aa).

The tract at residues 230–255 (QSSSGRDLGASSEVPVEPALEEAAEG) is disordered.

This sequence belongs to the universal ribosomal protein uS2 family.

This Rhizobium etli (strain CIAT 652) protein is Small ribosomal subunit protein uS2.